The chain runs to 172 residues: 3-phenylpropionate/cinnamic acid dioxygenase subunit beta (172 aa).

It belongs to the bacterial ring-hydroxylating dioxygenase beta subunit family. In terms of assembly, this dioxygenase system consists of four proteins: the two subunits of the hydroxylase component (HcaE and HcaF), a ferredoxin (HcaC) and a ferredoxin reductase (HcaD).

The catalysed reaction is 3-phenylpropanoate + NADH + O2 + H(+) = 3-(cis-5,6-dihydroxycyclohexa-1,3-dien-1-yl)propanoate + NAD(+). It catalyses the reaction (E)-cinnamate + NADH + O2 + H(+) = (2E)-3-(cis-5,6-dihydroxycyclohexa-1,3-dien-1-yl)prop-2-enoate + NAD(+). It functions in the pathway aromatic compound metabolism; 3-phenylpropanoate degradation. Its function is as follows. Part of the multicomponent 3-phenylpropionate dioxygenase. Converts 3-phenylpropionic acid (PP) and cinnamic acid (CI) into 3-phenylpropionate-dihydrodiol (PP-dihydrodiol) and cinnamic acid-dihydrodiol (CI-dihydrodiol), respectively. This chain is 3-phenylpropionate/cinnamic acid dioxygenase subunit beta, found in Shigella sonnei (strain Ss046).